The chain runs to 153 residues: MVFEGHLVGTELKVGVVVGRFNEFITSKLLGGALDGLKRHGVEEADIDVAWVPGAFEIPLIAKKMANSGKYDAVITLGTVIRGATTHYDYVCNEVAKGVASLSLQTDIPVIFGVLTTETIEQAIERAGTKAGNKGYESAVAAIEMAHLSKQWA.

5-amino-6-(D-ribitylamino)uracil is bound by residues Phe21, 55–57 (AFE), and 79–81 (TVI). 84 to 85 (AT) lines the (2S)-2-hydroxy-3-oxobutyl phosphate pocket. The Proton donor role is filled by His87. A 5-amino-6-(D-ribitylamino)uracil-binding site is contributed by Phe112. Residue Arg126 participates in (2S)-2-hydroxy-3-oxobutyl phosphate binding.

It belongs to the DMRL synthase family. Forms an icosahedral capsid composed of 60 subunits, arranged as a dodecamer of pentamers.

It carries out the reaction (2S)-2-hydroxy-3-oxobutyl phosphate + 5-amino-6-(D-ribitylamino)uracil = 6,7-dimethyl-8-(1-D-ribityl)lumazine + phosphate + 2 H2O + H(+). The protein operates within cofactor biosynthesis; riboflavin biosynthesis; riboflavin from 2-hydroxy-3-oxobutyl phosphate and 5-amino-6-(D-ribitylamino)uracil: step 1/2. Catalyzes the formation of 6,7-dimethyl-8-ribityllumazine by condensation of 5-amino-6-(D-ribitylamino)uracil with 3,4-dihydroxy-2-butanone 4-phosphate. This is the penultimate step in the biosynthesis of riboflavin. In Bacillus cereus (strain AH187), this protein is 6,7-dimethyl-8-ribityllumazine synthase.